The following is a 151-amino-acid chain: Probable chemoreceptor glutamine deamidase CheD (151 aa).

It belongs to the CheD family.

It carries out the reaction L-glutaminyl-[protein] + H2O = L-glutamyl-[protein] + NH4(+). Functionally, probably deamidates glutamine residues to glutamate on methyl-accepting chemotaxis receptors (MCPs), playing an important role in chemotaxis. This Methanosarcina barkeri (strain Fusaro / DSM 804) protein is Probable chemoreceptor glutamine deamidase CheD.